Here is a 273-residue protein sequence, read N- to C-terminus: Dermonecrotic toxin SdSicTox-betaIIB1bxi (273 aa).

The active site involves His-4. The Mg(2+) site is built by Glu-24 and Asp-26. Residue His-40 is the Nucleophile of the active site. 2 disulfides stabilise this stretch: Cys-44-Cys-50 and Cys-46-Cys-189. Asp-84 serves as a coordination point for Mg(2+).

This sequence belongs to the arthropod phospholipase D family. Class II subfamily. Mg(2+) serves as cofactor. As to expression, expressed by the venom gland.

The protein localises to the secreted. The catalysed reaction is an N-(acyl)-sphingosylphosphocholine = an N-(acyl)-sphingosyl-1,3-cyclic phosphate + choline. It carries out the reaction an N-(acyl)-sphingosylphosphoethanolamine = an N-(acyl)-sphingosyl-1,3-cyclic phosphate + ethanolamine. The enzyme catalyses a 1-acyl-sn-glycero-3-phosphocholine = a 1-acyl-sn-glycero-2,3-cyclic phosphate + choline. It catalyses the reaction a 1-acyl-sn-glycero-3-phosphoethanolamine = a 1-acyl-sn-glycero-2,3-cyclic phosphate + ethanolamine. Dermonecrotic toxins cleave the phosphodiester linkage between the phosphate and headgroup of certain phospholipids (sphingolipid and lysolipid substrates), forming an alcohol (often choline) and a cyclic phosphate. This toxin acts on sphingomyelin (SM). It may also act on ceramide phosphoethanolamine (CPE), lysophosphatidylcholine (LPC) and lysophosphatidylethanolamine (LPE), but not on lysophosphatidylserine (LPS), and lysophosphatidylglycerol (LPG). It acts by transphosphatidylation, releasing exclusively cyclic phosphate products as second products. Induces dermonecrosis, hemolysis, increased vascular permeability, edema, inflammatory response, and platelet aggregation. In Sicarius cf. damarensis (strain GJB-2008) (Six-eyed sand spider), this protein is Dermonecrotic toxin SdSicTox-betaIIB1bxi.